A 553-amino-acid polypeptide reads, in one-letter code: Probable malate:quinone oxidoreductase (553 aa).

The interval Pro524–Leu553 is disordered.

The protein belongs to the MQO family. It depends on FAD as a cofactor.

It carries out the reaction (S)-malate + a quinone = a quinol + oxaloacetate. It participates in carbohydrate metabolism; tricarboxylic acid cycle; oxaloacetate from (S)-malate (quinone route): step 1/1. This chain is Probable malate:quinone oxidoreductase, found in Burkholderia cenocepacia (strain HI2424).